Here is a 155-residue protein sequence, read N- to C-terminus: Ribosomal RNA large subunit methyltransferase H (155 aa).

Residues Leu-73, Gly-104, and 123–128 (LSPLTL) each bind S-adenosyl-L-methionine.

The protein belongs to the RNA methyltransferase RlmH family. Homodimer.

It is found in the cytoplasm. The catalysed reaction is pseudouridine(1915) in 23S rRNA + S-adenosyl-L-methionine = N(3)-methylpseudouridine(1915) in 23S rRNA + S-adenosyl-L-homocysteine + H(+). Specifically methylates the pseudouridine at position 1915 (m3Psi1915) in 23S rRNA. This chain is Ribosomal RNA large subunit methyltransferase H, found in Pseudomonas savastanoi pv. phaseolicola (strain 1448A / Race 6) (Pseudomonas syringae pv. phaseolicola (strain 1448A / Race 6)).